Here is a 299-residue protein sequence, read N- to C-terminus: Bifunctional protein FolD (299 aa).

Residues 166 to 168, Ser-191, and Ile-232 contribute to the NADP(+) site; that span reads GRS.

Belongs to the tetrahydrofolate dehydrogenase/cyclohydrolase family. Homodimer.

The enzyme catalyses (6R)-5,10-methylene-5,6,7,8-tetrahydrofolate + NADP(+) = (6R)-5,10-methenyltetrahydrofolate + NADPH. It carries out the reaction (6R)-5,10-methenyltetrahydrofolate + H2O = (6R)-10-formyltetrahydrofolate + H(+). The protein operates within one-carbon metabolism; tetrahydrofolate interconversion. Catalyzes the oxidation of 5,10-methylenetetrahydrofolate to 5,10-methenyltetrahydrofolate and then the hydrolysis of 5,10-methenyltetrahydrofolate to 10-formyltetrahydrofolate. In Dinoroseobacter shibae (strain DSM 16493 / NCIMB 14021 / DFL 12), this protein is Bifunctional protein FolD.